Reading from the N-terminus, the 541-residue chain is Multidrug transporter protein MdtP (541 aa).

14 helical membrane-spanning segments follow: residues Leu14–Gly34, Ile40–Thr60, Ile79–Asn99, Gly112–Gly132, Val141–Val161, Trp168–Leu188, Ile201–Gly221, Ser229–Val249, Leu273–Met293, Ile307–Tyr327, Ile329–Leu349, Leu359–Leu379, Phe401–Ala420, and Leu492–Phe512.

This sequence belongs to the major facilitator superfamily. EmrB family.

Its subcellular location is the cell membrane. In terms of biological role, multidrug efflux transporter. Contributes to resistance to several antibiotics, including fusidic acid, novobiocin, streptomycin and actinomycin, possibly by pumping these structurally unrelated antibiotics out of cells. This is Multidrug transporter protein MdtP from Bacillus subtilis (strain 168).